A 224-amino-acid chain; its full sequence is Peroxiredoxin-6 (224 aa).

The Thioredoxin domain occupies 5-169 (LLLGDVAPNF…ILRVVISLQL (165 aa)). Residues 31 to 40 (DSWGILFSHP) form a required and sufficient for targeting to lysosomes and lamellar bodies region. At T44 the chain carries Phosphothreonine. C47 functions as the Cysteine sulfenic acid (-SOH) intermediate; for peroxidase activity in the catalytic mechanism. K63 carries the post-translational modification N6-acetyllysine. A Phosphotyrosine modification is found at Y89. D140 (for phospholipase activity) is an active-site residue. At T177 the chain carries Phosphothreonine; by MAPK. At K209 the chain carries N6-acetyllysine; alternate. Position 209 is an N6-succinyllysine; alternate (K209).

This sequence belongs to the peroxiredoxin family. Prx6 subfamily. Homodimer. Interacts with GSTP1; mediates PRDX6 glutathionylation and regeneration. Interacts with APEX1. Interacts with STH. May interact with FAM168B. May interact with HTR2A. Post-translationally, irreversibly inactivated by overoxidation of Cys-47 to sulfinic acid (Cys-SO(2)H) and sulfonic acid (Cys-SO(3)H) forms upon oxidative stress. Phosphorylation at Thr-177 by MAP kinases increases the phospholipase activity of the enzyme. The phosphorylated form exhibits a greater lysophosphatidylcholine acyltransferase activity compared to the non-phosphorylated form.

It is found in the cytoplasm. The protein resides in the lysosome. The catalysed reaction is a hydroperoxide + 2 glutathione = an alcohol + glutathione disulfide + H2O. It carries out the reaction a 1,2-diacyl-sn-glycero-3-phosphocholine + H2O = a 1-acyl-sn-glycero-3-phosphocholine + a fatty acid + H(+). The enzyme catalyses a 1-acyl-sn-glycero-3-phosphocholine + an acyl-CoA = a 1,2-diacyl-sn-glycero-3-phosphocholine + CoA. It catalyses the reaction 1-hexadecanoyl-sn-glycero-3-phosphocholine + hexadecanoyl-CoA = 1,2-dihexadecanoyl-sn-glycero-3-phosphocholine + CoA. The catalysed reaction is 1,2-dihexadecanoyl-sn-glycero-3-phosphocholine + H2O = 1-hexadecanoyl-sn-glycero-3-phosphocholine + hexadecanoate + H(+). Functionally, thiol-specific peroxidase that catalyzes the reduction of hydrogen peroxide and organic hydroperoxides to water and alcohols, respectively. Can reduce H(2)O(2) and short chain organic, fatty acid, and phospholipid hydroperoxides. Also has phospholipase activity, and can therefore either reduce the oxidized sn-2 fatty acyl group of phospholipids (peroxidase activity) or hydrolyze the sn-2 ester bond of phospholipids (phospholipase activity). These activities are dependent on binding to phospholipids at acidic pH and to oxidized phospholipds at cytosolic pH. Plays a role in cell protection against oxidative stress by detoxifying peroxides and in phospholipid homeostasis. Exhibits acyl-CoA-dependent lysophospholipid acyltransferase which mediates the conversion of lysophosphatidylcholine (1-acyl-sn-glycero-3-phosphocholine or LPC) into phosphatidylcholine (1,2-diacyl-sn-glycero-3-phosphocholine or PC). Shows a clear preference for LPC as the lysophospholipid and for palmitoyl CoA as the fatty acyl substrate. In Pongo abelii (Sumatran orangutan), this protein is Peroxiredoxin-6 (PRDX6).